A 150-amino-acid polypeptide reads, in one-letter code: Multiprotein-bridging factor 1 (150 aa).

The segment at 36-71 (SSESKGAGQSKGPADHQRIAKLDRDDAPKPPEKVSA) is disordered. Residues 48–70 (PADHQRIAKLDRDDAPKPPEKVS) show a composition bias toward basic and acidic residues. Positions 84 to 137 (IKNAEGKSMTQKELATSVNAKPQDIADLESGRAVPDQALLGKLERKLNVKLRGA) constitute an HTH cro/C1-type domain. A DNA-binding region (H-T-H motif) is located at residues 94–113 (QKELATSVNAKPQDIADLES).

The protein belongs to the MBF1 family.

In terms of biological role, transcriptional coactivator that stimulates GCN4-dependent transcriptional activity by bridging the DNA-binding region of GCN4 and TBP (SPT15), thereby recruiting TBP to GCN4-bound promoters. Involved in induction of the ribosome quality control (RQC) pathway; a pathway that degrades nascent peptide chains during problematic translation. Required to prevent stalled ribosomes from frameshifting. In Cryptococcus neoformans var. neoformans serotype D (strain B-3501A) (Filobasidiella neoformans), this protein is Multiprotein-bridging factor 1 (MBF1).